Reading from the N-terminus, the 345-residue chain is Heat stress transcription factor A-2 (345 aa).

Residues 17–30 (GSVAASSSVGSSSS) are compositionally biased toward low complexity. The interval 17–40 (GSVAASSSVGSSSSPRPMEGLNET) is disordered. A DNA-binding region spans residues 42-136 (PPPFLTKTYE…LLKNIKRRRN (95 aa)). The tract at residues 150 to 216 (SCVEVGQYGF…QMMTFLAKAL (67 aa)) is hydrophobic repeat HR-A/B. The Nuclear localization signal signature appears at 231–238 (EKKSLFGL). The AHA1 motif lies at 273–282 (EMLFAAAIDD). Residue Lys315 forms a Glycyl lysine isopeptide (Lys-Gly) (interchain with G-Cter in SUMO) linkage. The AHA2 signature appears at 324-333 (LDWDSQDLHD). A Nuclear export signal motif is present at residues 334–341 (MVDQMGFL).

It belongs to the HSF family. Class A subfamily. In terms of assembly, homotrimer. Interacts with SUMO1. Binds to HSBP. Exhibits temperature-dependent phosphorylation. Post-translationally, sumoylated at Lys-315. Sumoylation represses its function.

The protein resides in the cytoplasm. The protein localises to the nucleus. Functionally, transcriptional activator that specifically binds DNA sequence 5'-AGAAnnTTCT-3' known as heat shock promoter elements (HSE). Seems to be involved in other environmental stress responses. Activates ascorbate peroxidase 2 (APX2) in addition to several heat shock protein (HSPs). Binds to the promoter of SGIP1 and activates its expression in heat acclimated plants. Involved in the mechanisms necessary for quick response to heat and subsequent heritable transgenerational memory of heat acclimation (global warming) such as early flowering and attenuated immunity; this process includes epigenetic regulation as well as post-transcriptional gene silencing (PTGS). In response to heat, HSFA2 is activated and promotes the expression of REF6 which in turn derepresses HSFA2, thus establishing an inheritable feedback loop able to trigger SGIP1 and subsequent SGIP1-mediated SGS3 degradation; this prevents the biosynthesis of trans-acting siRNA (tasiRNA) and leads to the release of HTT5, which drives early flowering but attenuates immunity. This is Heat stress transcription factor A-2 from Arabidopsis thaliana (Mouse-ear cress).